A 620-amino-acid chain; its full sequence is Leucine-rich repeat and immunoglobulin-like domain-containing nogo receptor-interacting protein 1 (620 aa).

The N-terminal stretch at 1 to 41 (MQVSKRMLAGGVRSMPSPLLACWQPILLLVLGSVLSGSATG) is a signal peptide. Disulfide bonds link Cys42–Cys48 and Cys46–Cys57. One can recognise an LRRNT domain in the interval 42–71 (CPPRCECSAQDRAVLCHRKRFVAVPEGIPT). Topologically, residues 42-561 (CPPRCECSAQ…FDIKTLIIAT (520 aa)) are extracellular. LRR repeat units follow at residues 72–93 (ETRL…EFAS), 96–117 (HLEE…AFNN), 120–141 (NLRT…VFTG), 144–165 (NLTK…MFQD), 168–189 (NLKS…AFSG), 192–213 (SLEQ…ALSH), 216–237 (GLIV…SFKR), 264–285 (NLTS…AVRH), 288–309 (YLRF…MLHE), 312–333 (RLQE…AFRG), and 336–357 (YLRV…VFHS). Asn144 carries an N-linked (GlcNAc...) asparagine glycan. Asn202 carries an N-linked (GlcNAc...) asparagine glycan. Asn264, Asn274, and Asn293 each carry an N-linked (GlcNAc...) asparagine glycan. N-linked (GlcNAc...) asparagine glycosylation is present at Asn341. Residues 369-423 (NPLACDCRLLWVFRRRWRLNFNRQQPTCATPEFVQGKEFKDFPDVLLPNYFTCRR) form the LRRCT domain. 3 disulfides stabilise this stretch: Cys373-Cys396, Cys375-Cys421, and Cys446-Cys497. In terms of domain architecture, Ig-like C2-type spans 411–513 (PDVLLPNYFT…GNDSMPAHLH (103 aa)). N-linked (GlcNAc...) asparagine glycans are attached at residues Asn492, Asn505, Asn526, and Asn542. Residues 562–582 (TMGFISFLGVVLFCLVLLFLW) form a helical membrane-spanning segment. The Cytoplasmic segment spans residues 583–620 (SRGKGNTKHNIEIEYVPRKSDAGISSADAPRKFNMKMI). Ser602 is subject to Phosphoserine.

In terms of assembly, homotetramer. Forms a ternary complex with RTN4R/NGFR and RTN4R/TNFRSF19. Interacts with NGRF and MYT1L. Interacts with RTN4R. In terms of processing, N-glycosylated. Contains predominantly high-mannose glycans. In terms of tissue distribution, expressed exclusively in the central nervous system. Highest level in the in amygdala, hippocampus, thalamus and cerebral cortex. In the rest of the brain a basal expression seems to be always present. Up-regulated in substantia nigra neurons from Parkinson disease patients.

It is found in the cell membrane. Functional component of the Nogo receptor signaling complex (RTN4R/NGFR) in RhoA activation responsible for some inhibition of axonal regeneration by myelin-associated factors. Is also an important negative regulator of oligodentrocyte differentiation and axonal myelination. Acts in conjunction with RTN4 and RTN4R in regulating neuronal precursor cell motility during cortical development. This Homo sapiens (Human) protein is Leucine-rich repeat and immunoglobulin-like domain-containing nogo receptor-interacting protein 1 (LINGO1).